Reading from the N-terminus, the 170-residue chain is Opacity-related protein POPM3 (170 aa).

This sequence belongs to the opacity porin family.

The protein localises to the cell outer membrane. This chain is Opacity-related protein POPM3 (opr), found in Neisseria meningitidis serogroup C.